A 406-amino-acid polypeptide reads, in one-letter code: Tyrosine--tRNA ligase (406 aa).

An L-tyrosine-binding site is contributed by tyrosine 35. The 'HIGH' region signature appears at 40-49; that stretch reads ATSASLHIGH. L-tyrosine is bound by residues tyrosine 167 and glutamine 171. The 'KMSKS' region signature appears at 227 to 231; it reads KMGKS. Position 230 (lysine 230) interacts with ATP. Residues 341 to 405 enclose the S4 RNA-binding domain; it reads ILLVDLMVLA…IGKKKILRIV (65 aa).

It belongs to the class-I aminoacyl-tRNA synthetase family. TyrS type 1 subfamily. Homodimer.

The protein localises to the cytoplasm. The catalysed reaction is tRNA(Tyr) + L-tyrosine + ATP = L-tyrosyl-tRNA(Tyr) + AMP + diphosphate + H(+). Catalyzes the attachment of tyrosine to tRNA(Tyr) in a two-step reaction: tyrosine is first activated by ATP to form Tyr-AMP and then transferred to the acceptor end of tRNA(Tyr). The polypeptide is Tyrosine--tRNA ligase (Borrelia duttonii (strain Ly)).